Consider the following 321-residue polypeptide: Glucokinase (321 aa).

9 to 14 (ADIGGT) contributes to the ATP binding site.

It belongs to the bacterial glucokinase family.

It is found in the cytoplasm. The catalysed reaction is D-glucose + ATP = D-glucose 6-phosphate + ADP + H(+). The chain is Glucokinase from Saccharophagus degradans (strain 2-40 / ATCC 43961 / DSM 17024).